The chain runs to 121 residues: Spermidine export protein MdtJ (121 aa).

Transmembrane regions (helical) follow at residues 1–21 (MYIY…GTLS), 32–52 (GGFI…SFAV), 55–75 (IALG…ITLF), and 82–102 (ESLS…IVLI).

It belongs to the drug/metabolite transporter (DMT) superfamily. Small multidrug resistance (SMR) (TC 2.A.7.1) family. MdtJ subfamily. As to quaternary structure, forms a complex with MdtI.

It is found in the cell inner membrane. Functionally, catalyzes the excretion of spermidine. This is Spermidine export protein MdtJ from Escherichia coli O139:H28 (strain E24377A / ETEC).